We begin with the raw amino-acid sequence, 643 residues long: Phosphomethylpyrimidine synthase (643 aa).

Substrate is bound by residues Asn-248, Met-277, Tyr-306, His-342, 362 to 364, 403 to 406, and Glu-442; these read SRG and DGLR. His-446 is a Zn(2+) binding site. Substrate is bound at residue Tyr-469. His-510 contributes to the Zn(2+) binding site. [4Fe-4S] cluster-binding residues include Cys-590, Cys-593, and Cys-598.

The protein belongs to the ThiC family. In terms of assembly, homodimer. It depends on [4Fe-4S] cluster as a cofactor.

The enzyme catalyses 5-amino-1-(5-phospho-beta-D-ribosyl)imidazole + S-adenosyl-L-methionine = 4-amino-2-methyl-5-(phosphooxymethyl)pyrimidine + CO + 5'-deoxyadenosine + formate + L-methionine + 3 H(+). It participates in cofactor biosynthesis; thiamine diphosphate biosynthesis. Its function is as follows. Catalyzes the synthesis of the hydroxymethylpyrimidine phosphate (HMP-P) moiety of thiamine from aminoimidazole ribotide (AIR) in a radical S-adenosyl-L-methionine (SAM)-dependent reaction. The polypeptide is Phosphomethylpyrimidine synthase (Burkholderia orbicola (strain MC0-3)).